A 1423-amino-acid chain; its full sequence is DNA-directed RNA polymerase subunit beta' (1423 aa).

Zn(2+) contacts are provided by C71, C73, C86, and C89. Mg(2+)-binding residues include D461, D463, and D465. Residues C815, C889, C896, and C899 each contribute to the Zn(2+) site.

It belongs to the RNA polymerase beta' chain family. The RNAP catalytic core consists of 2 alpha, 1 beta, 1 beta' and 1 omega subunit. When a sigma factor is associated with the core the holoenzyme is formed, which can initiate transcription. Mg(2+) is required as a cofactor. It depends on Zn(2+) as a cofactor.

It carries out the reaction RNA(n) + a ribonucleoside 5'-triphosphate = RNA(n+1) + diphosphate. DNA-dependent RNA polymerase catalyzes the transcription of DNA into RNA using the four ribonucleoside triphosphates as substrates. In Actinobacillus pleuropneumoniae serotype 7 (strain AP76), this protein is DNA-directed RNA polymerase subunit beta'.